The sequence spans 414 residues: Arrestin domain-containing protein 3 (414 aa).

2 short sequence motifs (PPxY motif) span residues 346–349 and 391–394; these read PPSY and PPLY. The interval 393-414 is disordered; the sequence is LYSEIDPNPDQSADDRPSCPSR. The segment covering 405 to 414 has biased composition (basic and acidic residues); the sequence is ADDRPSCPSR.

This sequence belongs to the arrestin family. In terms of assembly, interacts (via PPxY motifs) with NEDD4 (via WW domains). Interacts with ADRB2. Interacts with ADRB3. Interacts with HGS (via PPxY motifs). Does not bind TXN (thioredoxin). Interacts with ITCH.

It is found in the cytoplasm. The protein localises to the cell membrane. Its subcellular location is the lysosome. It localises to the endosome. The protein resides in the early endosome. Adapter protein that plays a role in regulating cell-surface expression of adrenergic receptors and probably also other G protein-coupled receptors. Plays a role in NEDD4-mediated ubiquitination and endocytosis af activated ADRB2 and subsequent ADRB2 degradation. May recruit NEDD4 to ADRB2. Alternatively, may function as adapter protein that does not play a major role in recruiting NEDD4 to ADRB2, but rather plays a role in a targeting ADRB2 to endosomes. This chain is Arrestin domain-containing protein 3 (ARRDC3), found in Pongo abelii (Sumatran orangutan).